Consider the following 449-residue polypeptide: Chromosomal replication initiator protein DnaA (449 aa).

The domain I, interacts with DnaA modulators stretch occupies residues 1-72; sequence MPNLEELWAY…VEGVYEFAQL (72 aa). The interval 72–109 is domain II; sequence LEVDPVIMTKDELQPAPATDQRPAVEEDDQNLTFKAKT. The segment at 110–326 is domain III, AAA+ region; that stretch reads HLNPKYTFDH…GALVRVQAFS (217 aa). Glycine 154, glycine 156, lysine 157, and threonine 158 together coordinate ATP. The segment at 327-449 is domain IV, binds dsDNA; sequence TMKNEDITTS…ELRNILKNRG (123 aa).

The protein belongs to the DnaA family. In terms of assembly, oligomerizes as a right-handed, spiral filament on DNA at oriC.

The protein localises to the cytoplasm. Functionally, plays an essential role in the initiation and regulation of chromosomal replication. ATP-DnaA binds to the origin of replication (oriC) to initiate formation of the DNA replication initiation complex once per cell cycle. Binds the DnaA box (a 9 base pair repeat at the origin) and separates the double-stranded (ds)DNA. Forms a right-handed helical filament on oriC DNA; dsDNA binds to the exterior of the filament while single-stranded (ss)DNA is stabiized in the filament's interior. The ATP-DnaA-oriC complex binds and stabilizes one strand of the AT-rich DNA unwinding element (DUE), permitting loading of DNA polymerase. After initiation quickly degrades to an ADP-DnaA complex that is not apt for DNA replication. Binds acidic phospholipids. This chain is Chromosomal replication initiator protein DnaA, found in Lacticaseibacillus paracasei (strain ATCC 334 / BCRC 17002 / CCUG 31169 / CIP 107868 / KCTC 3260 / NRRL B-441) (Lactobacillus paracasei).